Here is a 467-residue protein sequence, read N- to C-terminus: Zinc finger and BTB domain-containing protein 43 (467 aa).

An N-acetylmethionine modification is found at methionine 1. One can recognise a BTB domain in the interval 33–97 (CDVSIVVQGH…SYTGRLVMPA (65 aa)). Disordered stretches follow at residues 134–153 (LNHG…GLVE) and 162–227 (HTDF…EFHY). A compositionally biased stretch (polar residues) spans 140–149 (HQSPSSSNYN). 2 stretches are compositionally biased toward basic and acidic residues: residues 164–174 (DFPKAQELRDG) and 182–194 (KDEL…EHEY). Residues lysine 182, lysine 247, lysine 297, and lysine 358 each participate in a glycyl lysine isopeptide (Lys-Gly) (interchain with G-Cter in SUMO2) cross-link. The C2H2-type 1; atypical zinc finger occupies 373 to 394 (YPCQCGKSFTHKSQRDRHMSMH). Residues 400–422 (YGCSVCGKKFKMKHHLVGHMKIH) form a C2H2-type 2 zinc finger. At threonine 423 the chain carries Phosphothreonine. Residues 428-450 (YECNICAKRFMWRDSFHRHVTSC) form a C2H2-type 3; atypical zinc finger. A Glycyl lysine isopeptide (Lys-Gly) (interchain with G-Cter in SUMO2) cross-link involves residue lysine 458.

The protein belongs to the krueppel C2H2-type zinc-finger protein family. In terms of assembly, interacts with BDP1.

It is found in the nucleus. Functionally, may be involved in transcriptional regulation. In Mus musculus (Mouse), this protein is Zinc finger and BTB domain-containing protein 43 (Zbtb43).